A 165-amino-acid chain; its full sequence is Chorismate pyruvate-lyase (165 aa).

Substrate-binding residues include Met-35, Arg-77, Leu-115, and Glu-156.

It belongs to the UbiC family. Monomer.

Its subcellular location is the cytoplasm. It carries out the reaction chorismate = 4-hydroxybenzoate + pyruvate. It participates in cofactor biosynthesis; ubiquinone biosynthesis. In terms of biological role, removes the pyruvyl group from chorismate, with concomitant aromatization of the ring, to provide 4-hydroxybenzoate (4HB) for the ubiquinone pathway. In Escherichia coli O17:K52:H18 (strain UMN026 / ExPEC), this protein is Chorismate pyruvate-lyase.